We begin with the raw amino-acid sequence, 435 residues long: Putative FBD-associated F-box protein At5g56820 (435 aa).

One can recognise an F-box domain in the interval 14–60; that stretch reads SDRISYLPDDLLLRILSFIHTSDAISTSLLSKRWKFVWKMMPTLDLD. The FBD domain occupies 341–390; it reads VRKPNSVPECLTFHLETLEWQGYAGRPEDKEIAVYILGNALRLNTATISR.

The sequence is that of Putative FBD-associated F-box protein At5g56820 from Arabidopsis thaliana (Mouse-ear cress).